The primary structure comprises 588 residues: Probable fumarate reductase Ifc3 (588 aa).

A signal peptide spans 1 to 22 (MKLKYLVSAMALVVLSSGTAMA). Heme c is bound by residues H31, C37, C40, H41, C58, C61, H62, H78, H81, C87, C90, H91, G93, H94, C101, C104, and H105. Residues 135 to 588 (AIAAGPSETT…DNAAKHALDK (454 aa)) are flavoprotein-like. Residues A154, D173, N181, S182, G187, and G188 each contribute to the FAD site. G187 lines the fumarate pocket. G187 contributes to the succinate binding site. R218 is a heme c binding site. Positions 295 and 361 each coordinate FAD. Residues H382, S394, and E395 each contribute to the succinate site. Positions 394 and 395 each coordinate fumarate. The Proton donor role is filled by R419. A fumarate-binding site is contributed by H521. H521 is a binding site for succinate. E551 is an FAD binding site. Fumarate is bound by residues R561 and G564. Positions 561 and 564 each coordinate succinate. G564, A566, and I567 together coordinate FAD.

In terms of assembly, homodimer. FAD is required as a cofactor. The cofactor is heme c.

The protein resides in the periplasm. Flavocytochrome that catalyzes the reduction of fumarate to succinate in vitro. Is essentially unidirectional, catalyzing only fumarate reduction. In vitro, can use the artificial electron donor methyl viologen. May be involved in an alternative route for electron transport to Fe(3+). The protein is Probable fumarate reductase Ifc3 of Shewanella frigidimarina (strain NCIMB 400).